We begin with the raw amino-acid sequence, 473 residues long: Dol-P-Glc:Glc(2)Man(9)GlcNAc(2)-PP-Dol alpha-1,2-glucosyltransferase (473 aa).

The Cytoplasmic segment spans residues 1-6 (MAQLEG). Residues 7-27 (YYFSAALSCTFLVSCLLFSAF) form a helical membrane-spanning segment. Topologically, residues 28-64 (SRALREPYMDEIFHLPQAQRYCEGHFSLSQWDPMITT) are extracellular. Residues 65–85 (LPGLYLVSIGVIKPAIWIFGW) traverse the membrane as a helical segment. Over 86 to 97 (SEHVVCSIGMLR) the chain is Cytoplasmic. Residues 98–118 (FVNLLFSVGNFYLLYLLFCKV) traverse the membrane as a helical segment. Topologically, residues 119–130 (QPRNKAASSIQR) are extracellular. The next 2 membrane-spanning stretches (helical) occupy residues 131–151 (VLSTLTLAVFPTLYFFNFLYY) and 152–172 (TEAGSMFFTLFAYLMCLYGNH). At 173-175 (KTS) the chain is on the extracellular side. The chain crosses the membrane as a helical span at residues 176 to 196 (AFLGFCGFMFRQTNIIWAVFC). The Cytoplasmic portion of the chain corresponds to 197 to 249 (AGNVIAQKLTEAWKTELQKKEDRLPPIKGPFAEFRKILQFLLAYSMSFKNLSM). A helical transmembrane segment spans residues 250 to 270 (LLLLTWPYILLGFLFCAFVVV). Over 271-283 (NGGIVIGDRSSHE) the chain is Extracellular. The chain crosses the membrane as a helical span at residues 284–304 (ACLHFPQLFYFFSFTLFFSFP). The Cytoplasmic segment spans residues 305–323 (HLLSPSKIKTFLSLVWKRR). Residues 324-344 (ILFFVVTLVSVFLVWKFTYAH) form a helical membrane-spanning segment. The Extracellular segment spans residues 345-367 (KYLLADNRHYTFYVWKRVFQRYE). Residues 368–388 (TVKYLLVPAYIFAGWSIADSL) traverse the membrane as a helical segment. The Cytoplasmic segment spans residues 389 to 392 (KSKS). Residues 393–413 (IFWNLMFFICLFTVIVPQKLL) form a helical membrane-spanning segment. Topologically, residues 414-436 (EFRYFILPYVIYRLNIPLPPTSR) are extracellular. A helical membrane pass occupies residues 437-457 (LICELSCYAVVNFITFFIFLN). Residues 458–473 (KTFQWPNSQDIQRFMW) are Cytoplasmic-facing.

This sequence belongs to the ALG10 glucosyltransferase family.

The protein localises to the endoplasmic reticulum membrane. The enzyme catalyses an alpha-D-Glc-(1-&gt;3)-alpha-D-Glc-(1-&gt;3)-alpha-D-Man-(1-&gt;2)-alpha-D-Man-(1-&gt;2)-alpha-D-Man-(1-&gt;3)-[alpha-D-Man-(1-&gt;2)-alpha-D-Man-(1-&gt;3)-[alpha-D-Man-(1-&gt;2)-alpha-D-Man-(1-&gt;6)]-alpha-D-Man-(1-&gt;6)]-beta-D-Man-(1-&gt;4)-beta-D-GlcNAc-(1-&gt;4)-alpha-D-GlcNAc-diphospho-di-trans,poly-cis-dolichol + a di-trans,poly-cis-dolichyl beta-D-glucosyl phosphate = a alpha-D-Glc-(1-&gt;2)-alpha-D-Glc-(1-&gt;3)-alpha-D-Glc-(1-&gt;3)-alpha-D-Man-(1-&gt;2)-alpha-D-Man-(1-&gt;2)-alpha-D-Man-(1-&gt;3)-[alpha-D-Man-(1-&gt;2)-alpha-D-Man-(1-&gt;3)-[alpha-D-Man-(1-&gt;2)-alpha-D-Man-(1-&gt;6)]-alpha-D-Man-(1-&gt;6)]-beta-D-Man-(1-&gt;4)-beta-D-GlcNAc-(1-&gt;4)-alpha-D-GlcNAc-diphospho-di-trans,poly-cis-dolichol + a di-trans,poly-cis-dolichyl phosphate + H(+). Its pathway is protein modification; protein glycosylation. Dol-P-Glc:Glc(2)Man(9)GlcNAc(2)-PP-Dol alpha-1,2-glucosyltransferase that operates in the biosynthetic pathway of dolichol-linked oligosaccharides, the glycan precursors employed in protein asparagine (N)-glycosylation. The assembly of dolichol-linked oligosaccharides begins on the cytosolic side of the endoplasmic reticulum membrane and finishes in its lumen. The sequential addition of sugars to dolichol pyrophosphate produces dolichol-linked oligosaccharides containing fourteen sugars, including two GlcNAcs, nine mannoses and three glucoses. Once assembled, the oligosaccharide is transferred from the lipid to nascent proteins by oligosaccharyltransferases. In the lumen of the endoplasmic reticulum, adds the third and last glucose residue from dolichyl phosphate glucose (Dol-P-Glc) onto the lipid-linked oligosaccharide intermediate Glc(2)Man(9)GlcNAc(2)-PP-Dol to produce Glc(3)Man(9)GlcNAc(2)-PP-Dol. The sequence is that of Dol-P-Glc:Glc(2)Man(9)GlcNAc(2)-PP-Dol alpha-1,2-glucosyltransferase from Homo sapiens (Human).